A 406-amino-acid chain; its full sequence is Phosphopentomutase (406 aa).

The Mn(2+) site is built by Asp-10, Asp-305, His-310, Asp-346, His-347, and His-358.

The protein belongs to the phosphopentomutase family. Mn(2+) serves as cofactor.

It is found in the cytoplasm. It carries out the reaction 2-deoxy-alpha-D-ribose 1-phosphate = 2-deoxy-D-ribose 5-phosphate. It catalyses the reaction alpha-D-ribose 1-phosphate = D-ribose 5-phosphate. The protein operates within carbohydrate degradation; 2-deoxy-D-ribose 1-phosphate degradation; D-glyceraldehyde 3-phosphate and acetaldehyde from 2-deoxy-alpha-D-ribose 1-phosphate: step 1/2. Isomerase that catalyzes the conversion of deoxy-ribose 1-phosphate (dRib-1-P) and ribose 1-phosphate (Rib-1-P) to deoxy-ribose 5-phosphate (dRib-5-P) and ribose 5-phosphate (Rib-5-P), respectively. This chain is Phosphopentomutase, found in Rhizobium etli (strain ATCC 51251 / DSM 11541 / JCM 21823 / NBRC 15573 / CFN 42).